The chain runs to 68 residues: Protein transport protein Sec61 gamma-1 subunit (68 aa).

Residues 1–32 are Cytoplasmic-facing; the sequence is MDKVVKFAEPGRAFAKDSIRLVKRCTKPDRKE. A helical membrane pass occupies residues 33-61; the sequence is FQKIAIATAVGFAIMGFIGFFVKLIHIPI. Topologically, residues 62 to 68 are extracellular; that stretch reads NNIIVGS.

The protein belongs to the SecE/SEC61-gamma family. As to quaternary structure, heterotrimeric complex composed of SEC61-alpha, SEC61-beta and SEC61-gamma.

It is found in the endoplasmic reticulum membrane. Necessary for protein translocation in the endoplasmic reticulum. This chain is Protein transport protein Sec61 gamma-1 subunit (SEC61G1), found in Drosophila melanogaster (Fruit fly).